The sequence spans 474 residues: Chromosomal replication initiator protein DnaA (474 aa).

The domain I, interacts with DnaA modulators stretch occupies residues 1–91 (MSEELWQRCL…STRASTPAAS (91 aa)). The interval 89-138 (AASYFNGSSSSSSNGPITTPAAAPAPRQPESDSRPQPTSLGGARKHRSNL) is disordered. A domain II region spans residues 91–136 (SYFNGSSSSSSNGPITTPAAAPAPRQPESDSRPQPTSLGGARKHRS). Positions 96–113 (SSSSSSNGPITTPAAAPA) are enriched in low complexity. Residues 137 to 354 (NLNTGFTFST…GALRRVIAHV (218 aa)) are domain III, AAA+ region. Positions 182, 184, 185, and 186 each coordinate ATP. A domain IV, binds dsDNA region spans residues 355-474 (RFTGAQIDIG…YLNLLRTLTS (120 aa)).

It belongs to the DnaA family. As to quaternary structure, oligomerizes as a right-handed, spiral filament on DNA at oriC.

It localises to the cytoplasm. Functionally, plays an essential role in the initiation and regulation of chromosomal replication. ATP-DnaA binds to the origin of replication (oriC) to initiate formation of the DNA replication initiation complex once per cell cycle. Binds the DnaA box (a 9 base pair repeat at the origin) and separates the double-stranded (ds)DNA. Forms a right-handed helical filament on oriC DNA; dsDNA binds to the exterior of the filament while single-stranded (ss)DNA is stabiized in the filament's interior. The ATP-DnaA-oriC complex binds and stabilizes one strand of the AT-rich DNA unwinding element (DUE), permitting loading of DNA polymerase. After initiation quickly degrades to an ADP-DnaA complex that is not apt for DNA replication. Binds acidic phospholipids. This Alcanivorax borkumensis (strain ATCC 700651 / DSM 11573 / NCIMB 13689 / SK2) protein is Chromosomal replication initiator protein DnaA.